A 234-amino-acid polypeptide reads, in one-letter code: Large ribosomal subunit protein uL1 (234 aa).

Belongs to the universal ribosomal protein uL1 family. In terms of assembly, part of the 50S ribosomal subunit.

Binds directly to 23S rRNA. The L1 stalk is quite mobile in the ribosome, and is involved in E site tRNA release. In terms of biological role, protein L1 is also a translational repressor protein, it controls the translation of the L11 operon by binding to its mRNA. This chain is Large ribosomal subunit protein uL1, found in Aliivibrio fischeri (strain MJ11) (Vibrio fischeri).